Consider the following 380-residue polypeptide: 1-deoxy-D-xylulose 5-phosphate reductoisomerase (380 aa).

8 residues coordinate NADPH: T10, G11, S12, I13, G36, R37, N38, and N120. K121 serves as a coordination point for 1-deoxy-D-xylulose 5-phosphate. Residue E122 coordinates NADPH. Residue D146 participates in Mn(2+) binding. The 1-deoxy-D-xylulose 5-phosphate site is built by S147, E148, S172, and H195. E148 lines the Mn(2+) pocket. G201 lines the NADPH pocket. S208, N213, K214, and E217 together coordinate 1-deoxy-D-xylulose 5-phosphate. E217 contacts Mn(2+).

Belongs to the DXR family. Mg(2+) is required as a cofactor. Mn(2+) serves as cofactor.

It catalyses the reaction 2-C-methyl-D-erythritol 4-phosphate + NADP(+) = 1-deoxy-D-xylulose 5-phosphate + NADPH + H(+). The protein operates within isoprenoid biosynthesis; isopentenyl diphosphate biosynthesis via DXP pathway; isopentenyl diphosphate from 1-deoxy-D-xylulose 5-phosphate: step 1/6. Catalyzes the NADPH-dependent rearrangement and reduction of 1-deoxy-D-xylulose-5-phosphate (DXP) to 2-C-methyl-D-erythritol 4-phosphate (MEP). In Listeria welshimeri serovar 6b (strain ATCC 35897 / DSM 20650 / CCUG 15529 / CIP 8149 / NCTC 11857 / SLCC 5334 / V8), this protein is 1-deoxy-D-xylulose 5-phosphate reductoisomerase.